The primary structure comprises 129 residues: uncharacterized protein (129 aa).

Residues Q6–Q129 enclose the VOC domain. 4 residues coordinate a divalent metal cation: H9, E57, H78, and E125.

To B.subtilis YwkD.

This is an uncharacterized protein from Escherichia coli (strain K12).